The sequence spans 1455 residues: DNA-directed RNA polymerase subunit beta (1455 aa).

The protein belongs to the RNA polymerase beta chain family. In terms of assembly, the RNAP catalytic core consists of 2 alpha, 1 beta, 1 beta' and 1 omega subunit. When a sigma factor is associated with the core the holoenzyme is formed, which can initiate transcription.

The enzyme catalyses RNA(n) + a ribonucleoside 5'-triphosphate = RNA(n+1) + diphosphate. Its function is as follows. DNA-dependent RNA polymerase catalyzes the transcription of DNA into RNA using the four ribonucleoside triphosphates as substrates. The protein is DNA-directed RNA polymerase subunit beta of Rhizorhabdus wittichii (strain DSM 6014 / CCUG 31198 / JCM 15750 / NBRC 105917 / EY 4224 / RW1) (Sphingomonas wittichii).